We begin with the raw amino-acid sequence, 272 residues long: ATP synthase subunit a (272 aa).

7 helical membrane passes run glycine 39 to isoleucine 59, valine 103 to isoleucine 123, proline 124 to proline 144, phenylalanine 152 to valine 172, phenylalanine 181 to leucine 201, valine 221 to tryptophan 241, and alanine 242 to valine 262.

It belongs to the ATPase A chain family. F-type ATPases have 2 components, CF(1) - the catalytic core - and CF(0) - the membrane proton channel. CF(1) has five subunits: alpha(3), beta(3), gamma(1), delta(1), epsilon(1). CF(0) has three main subunits: a(1), b(2) and c(9-12). The alpha and beta chains form an alternating ring which encloses part of the gamma chain. CF(1) is attached to CF(0) by a central stalk formed by the gamma and epsilon chains, while a peripheral stalk is formed by the delta and b chains.

The protein localises to the cell inner membrane. Key component of the proton channel; it plays a direct role in the translocation of protons across the membrane. This is ATP synthase subunit a from Ectopseudomonas mendocina (strain ymp) (Pseudomonas mendocina).